The primary structure comprises 383 residues: Glutamyl-tRNA reductase (383 aa).

Substrate is bound by residues 38-41, Ser82, 87-89, and Gln93; these read TCNR and EDQ. The active-site Nucleophile is Cys39. Residue 161–166 coordinates NADP(+); the sequence is GAGEIA.

It belongs to the glutamyl-tRNA reductase family. Homodimer.

The enzyme catalyses (S)-4-amino-5-oxopentanoate + tRNA(Glu) + NADP(+) = L-glutamyl-tRNA(Glu) + NADPH + H(+). It participates in porphyrin-containing compound metabolism; protoporphyrin-IX biosynthesis; 5-aminolevulinate from L-glutamyl-tRNA(Glu): step 1/2. Its function is as follows. Catalyzes the NADPH-dependent reduction of glutamyl-tRNA(Glu) to glutamate 1-semialdehyde (GSA). The sequence is that of Glutamyl-tRNA reductase from Methanococcus aeolicus (strain ATCC BAA-1280 / DSM 17508 / OCM 812 / Nankai-3).